Consider the following 1857-residue polypeptide: Peripheral-type benzodiazepine receptor-associated protein 1 (1857 aa).

3 disordered regions span residues 1-103, 284-321, and 565-629; these read MEQL…RPED, QRET…QEDA, and PKDL…DTAS. Positions 55–67 are enriched in basic and acidic residues; sequence LRSEESSKPKGDG. Polar residues predominate over residues 87-96; it reads LGQQASSSGP. Pro residues predominate over residues 289–298; the sequence is PLPPSWPPGP. Composition is skewed to low complexity over residues 299–316 and 603–616; these read ALQA…GEAT and SLSN…IHNS. The 68-residue stretch at 653 to 720 folds into the SH3 1 domain; it reads ARIQVFLARY…PSNFVERVSD (68 aa). Residues 729 to 789 are disordered; the sequence is PELADLSHSS…PSPEGLGEPP (61 aa). Residues 755–764 show a composition bias toward low complexity; it reads GGQSSVGRSQ. Fibronectin type-III domains follow at residues 791 to 882, 884 to 976, and 981 to 1081; these read VPYP…ARAG, VPSQ…TLPA, and APLD…LAPA. Disordered stretches follow at residues 1083 to 1311, 1330 to 1479, and 1501 to 1601; these read LPAR…SDEE, FSIP…CSRG, and YDSE…RGVR. Residues 1098–1116 are compositionally biased toward low complexity; the sequence is ARAPLASASPGPGDPSSPL. Residues 1138 to 1147 are compositionally biased toward basic and acidic residues; it reads EMAKGSHEDP. Positions 1201-1218 are enriched in polar residues; it reads ASSSTQGARAQQAPNTEM. Positions 1259-1274 are enriched in acidic residues; that stretch reads DIQEEEEEEEEEEEEE. The segment covering 1278 to 1292 has biased composition (polar residues); that stretch reads RTCSFQKQVAGNSIR. Residues 1333–1346 show a composition bias toward acidic residues; sequence PEEEEEEEEDEEEE. 2 stretches are compositionally biased toward basic and acidic residues: residues 1420-1429 and 1554-1586; these read RPPDPREHCS and AWEK…EARG. One can recognise an SH3 2 domain in the interval 1625–1693; sequence LPVRIFVALF…PCNMVAEVAV (69 aa). Disordered stretches follow at residues 1723–1761 and 1823–1857; these read VYST…VPSA and SNFL…RVQC. The SH3 3 domain occupies 1764 to 1831; that stretch reads KAPHSMVAAF…PSNFLEGPGP (68 aa).

This sequence belongs to the RIMBP family. Interacts with RIMS1 and RIMS2. Interacts with TSPO. Interacts with CACNA1A. As to expression, predominantly expressed in brain, pituitary gland and thymus in adults. In adult brain, highest expression found in temporal lobe and the putamen, followed by amygdala, caudate nucleus, cerebral cortex, occipital and frontal lobe. A high expression level is also observed in fetal tissues like brain, heart, kidney and thymus.

It is found in the cytoplasm. It localises to the mitochondrion. In terms of biological role, required for synaptic transmission regulation. It probably controls the recruitement of voltage-gated calcium channels to the presynaptic membrane, and modulates neurotransmitter release. This Homo sapiens (Human) protein is Peripheral-type benzodiazepine receptor-associated protein 1.